A 210-amino-acid polypeptide reads, in one-letter code: Type III pantothenate kinase (210 aa).

Aspartate 5–histidine 12 contributes to the ATP binding site. Residues tyrosine 69 and glycine 73 to arginine 76 each bind substrate. Residue aspartate 75 is the Proton acceptor of the active site. Residue aspartate 90 participates in K(+) binding. Residue serine 93 participates in ATP binding. Threonine 145 provides a ligand contact to substrate.

Belongs to the type III pantothenate kinase family. Homodimer. The cofactor is NH4(+). It depends on K(+) as a cofactor.

It is found in the cytoplasm. It catalyses the reaction (R)-pantothenate + ATP = (R)-4'-phosphopantothenate + ADP + H(+). It participates in cofactor biosynthesis; coenzyme A biosynthesis; CoA from (R)-pantothenate: step 1/5. Its function is as follows. Catalyzes the phosphorylation of pantothenate (Pan), the first step in CoA biosynthesis. The protein is Type III pantothenate kinase of Wolinella succinogenes (strain ATCC 29543 / DSM 1740 / CCUG 13145 / JCM 31913 / LMG 7466 / NCTC 11488 / FDC 602W) (Vibrio succinogenes).